The sequence spans 159 residues: Ribosomal RNA large subunit methyltransferase H (159 aa).

S-adenosyl-L-methionine is bound by residues leucine 76, glycine 108, and 127–132 (FSKMTF).

This sequence belongs to the RNA methyltransferase RlmH family. As to quaternary structure, homodimer.

It localises to the cytoplasm. It catalyses the reaction pseudouridine(1915) in 23S rRNA + S-adenosyl-L-methionine = N(3)-methylpseudouridine(1915) in 23S rRNA + S-adenosyl-L-homocysteine + H(+). In terms of biological role, specifically methylates the pseudouridine at position 1915 (m3Psi1915) in 23S rRNA. This is Ribosomal RNA large subunit methyltransferase H from Bifidobacterium adolescentis (strain ATCC 15703 / DSM 20083 / NCTC 11814 / E194a).